The following is a 419-amino-acid chain: Inositol-tetrakisphosphate 1-kinase (419 aa).

A 1D-myo-inositol 1,3,4-trisphosphate-binding site is contributed by lysine 18. Residues arginine 106 and lysine 157 each coordinate ATP. In terms of domain architecture, ATP-grasp spans 117-325 (EAYMKDDRIC…IASVLQGQSS (209 aa)). Residues histidine 167 and lysine 199 each contribute to the 1D-myo-inositol 1,3,4-trisphosphate site. Residues 188–199 (QNFINHNAVLYK), serine 214, serine 232, and serine 236 each bind ATP. Mg(2+) contacts are provided by aspartate 281, aspartate 295, and asparagine 297. Asparagine 297 contributes to the 1D-myo-inositol 1,3,4-trisphosphate binding site. Lysine 388 bears the N6-acetyllysine; by EP300 and CREBBP mark. A Phosphoserine modification is found at serine 401. The residue at position 415 (lysine 415) is an N6-acetyllysine; by EP300 and CREBBP.

It belongs to the ITPK1 family. As to quaternary structure, monomer. Interacts with GPS1/COPS1. Requires Mg(2+) as cofactor. Acetylation by EP300 and CREBBP destabilizes ITPK1, and down-regulates enzymatic activity. Deacetylated by SIRT1.

The catalysed reaction is 1D-myo-inositol 3,4,5,6-tetrakisphosphate + ATP = 1D-myo-inositol 1,3,4,5,6-pentakisphosphate + ADP + H(+). It catalyses the reaction 1D-myo-inositol 1,3,4-trisphosphate + ATP = 1D-myo-inositol 1,3,4,5-tetrakisphosphate + ADP + H(+). It carries out the reaction 1D-myo-inositol 1,3,4-trisphosphate + ATP = 1D-myo-inositol 1,3,4,6-tetrakisphosphate + ADP + H(+). The enzyme catalyses 1D-myo-inositol 3,4,6-trisphosphate + ATP = 1D-myo-inositol 1,3,4,6-tetrakisphosphate + ADP + H(+). The catalysed reaction is 1D-myo-inositol 1,3,4-trisphosphate + 1D-myo-inositol 1,3,4,5,6-pentakisphosphate = 1D-myo-inositol 3,4,5,6-tetrakisphosphate + 1D-myo-inositol 1,3,4,6-tetrakisphosphate. It catalyses the reaction 1D-myo-inositol 1,3,4-trisphosphate + 1D-myo-inositol 1,3,4,5,6-pentakisphosphate = 1D-myo-inositol 3,4,5,6-tetrakisphosphate + 1D-myo-inositol 1,3,4,5-tetrakisphosphate. In terms of biological role, kinase that can phosphorylate various inositol polyphosphate such as Ins(3,4,5,6)P4 or Ins(1,3,4)P3. Phosphorylates Ins(3,4,5,6)P4 at position 1 to form Ins(1,3,4,5,6)P5. This reaction is thought to have regulatory importance, since Ins(3,4,5,6)P4 is an inhibitor of plasma membrane Ca(2+)-activated Cl(-) channels, while Ins(1,3,4,5,6)P5 is not. Also phosphorylates Ins(1,3,4)P3 on O-5 and O-6 to form Ins(1,3,4,6)P4, an essential molecule in the hexakisphosphate (InsP6) pathway. Also acts as an inositol polyphosphate phosphatase that dephosphorylates Ins(1,3,4,5)P4 and Ins(1,3,4,6)P4 to Ins(1,3,4)P3, and Ins(1,3,4,5,6)P5 to Ins(3,4,5,6)P4. May also act as an isomerase that interconverts the inositol tetrakisphosphate isomers Ins(1,3,4,5)P4 and Ins(1,3,4,6)P4 in the presence of ADP and magnesium. Probably acts as the rate-limiting enzyme of the InsP6 pathway. Modifies TNF-alpha-induced apoptosis by interfering with the activation of TNFRSF1A-associated death domain. Plays an important role in MLKL-mediated necroptosis. Produces highly phosphorylated inositol phosphates such as inositolhexakisphosphate (InsP6) which bind to MLKL mediating the release of an N-terminal auto-inhibitory region leading to its activation. Essential for activated phospho-MLKL to oligomerize and localize to the cell membrane during necroptosis. This is Inositol-tetrakisphosphate 1-kinase (ITPK1) from Bos taurus (Bovine).